The following is a 535-amino-acid chain: Phosphoenolpyruvate carboxykinase (ATP) (535 aa).

The substrate site is built by R59, Y201, and K207. ATP-binding positions include K207, H226, and 243–251; that span reads GLSGTGKTT. Mn(2+)-binding residues include K207 and H226. D264 contacts Mn(2+). ATP is bound by residues E292, R328, 444 to 445, and T450; that span reads RI. R328 contributes to the substrate binding site.

Belongs to the phosphoenolpyruvate carboxykinase (ATP) family. Requires Mn(2+) as cofactor.

Its subcellular location is the cytoplasm. The catalysed reaction is oxaloacetate + ATP = phosphoenolpyruvate + ADP + CO2. It functions in the pathway carbohydrate biosynthesis; gluconeogenesis. Involved in the gluconeogenesis. Catalyzes the conversion of oxaloacetate (OAA) to phosphoenolpyruvate (PEP) through direct phosphoryl transfer between the nucleoside triphosphate and OAA. This Bacteroides thetaiotaomicron (strain ATCC 29148 / DSM 2079 / JCM 5827 / CCUG 10774 / NCTC 10582 / VPI-5482 / E50) protein is Phosphoenolpyruvate carboxykinase (ATP).